A 189-amino-acid chain; its full sequence is MKSAIIKEFLAHQETIAKVIETMQEPLEKASKIAVETLKNGNKILLCGNGGSAADAQHFAAELTGRYKTERRGLPGIALTTDTSALTAIGNDYGYDRVFDRQVEALASKGDLLIGISTSGNSTNVINALKVARDLGCKTIGLTGRDGGKMNELCDINLVVPSNDTPRIQEMHILFEHTICQIIDNELSH.

The SIS domain occupies 34–189 (AVETLKNGNK…CQIIDNELSH (156 aa)). 49 to 51 (NGG) is a binding site for substrate. Zn(2+) contacts are provided by His58 and Glu62. Substrate-binding positions include Glu62, 91–92 (ND), 117–119 (STS), Ser122, and Gln169. Positions 169 and 177 each coordinate Zn(2+).

The protein belongs to the SIS family. GmhA subfamily. As to quaternary structure, homotetramer. It depends on Zn(2+) as a cofactor.

It localises to the cytoplasm. The catalysed reaction is 2 D-sedoheptulose 7-phosphate = D-glycero-alpha-D-manno-heptose 7-phosphate + D-glycero-beta-D-manno-heptose 7-phosphate. It functions in the pathway carbohydrate biosynthesis; D-glycero-D-manno-heptose 7-phosphate biosynthesis; D-glycero-alpha-D-manno-heptose 7-phosphate and D-glycero-beta-D-manno-heptose 7-phosphate from sedoheptulose 7-phosphate: step 1/1. In terms of biological role, catalyzes the isomerization of sedoheptulose 7-phosphate in D-glycero-D-manno-heptose 7-phosphate. This is Phosphoheptose isomerase from Aliarcobacter butzleri (strain RM4018) (Arcobacter butzleri).